Consider the following 522-residue polypeptide: L-tyrosine/L-DOPA decarboxylase 2 (522 aa).

2 repeat units span residues 75–132 (KDVH…TELE) and 135–186 (VMDW…GREH). A 2 X approximate tandem repeats region spans residues 75 to 186 (KDVHDDIVPG…RILDRIGREH (112 aa)). Pyridoxal 5'-phosphate contacts are provided by Thr163, Cys164, Thr258, and Asn312. Lys315 carries the post-translational modification N6-(pyridoxal phosphate)lysine.

The protein belongs to the group II decarboxylase family. Pyridoxal 5'-phosphate serves as cofactor. As to expression, strongly expressed in all tissues, particularly in thick roots.

The catalysed reaction is L-tyrosine + H(+) = tyramine + CO2. The enzyme catalyses L-dopa + H(+) = dopamine + CO2. It participates in aromatic compound metabolism. It functions in the pathway alkaloid biosynthesis. Functionally, aromatic amino acid decarboxylase participating in the biosynthesis of natural products derived from phenylethylamine, including mescaline, a natural hallucinogen potentially used in psychotherapeutic treatments. Catalyzes the decarboxylation of L-tyrosine and L-DOPA. The protein is L-tyrosine/L-DOPA decarboxylase 2 of Lophophora williamsii (Peyote).